Reading from the N-terminus, the 41-residue chain is Ostricacin-2 (41 aa).

Intrachain disulfides connect Cys-8–Cys-36, Cys-15–Cys-30, and Cys-20–Cys-37.

It is found in the secreted. Has antibacterial activity against the Gram-positive bacterium S.aureus 1056 MRSA (MIC=1.25 ug/ml) and the Gram-negative bacterium E.coli O157:H7 (MIC=0.96 ug/ml). Has antifungal activity against the yeast C.albicans 3153A (MIC=6.20 ug/ml). The protein is Ostricacin-2 of Struthio camelus (Common ostrich).